The primary structure comprises 266 residues: Putative carbamate hydrolase RutD (266 aa).

It belongs to the AB hydrolase superfamily. Hydrolase RutD family.

The enzyme catalyses carbamate + 2 H(+) = NH4(+) + CO2. In terms of biological role, involved in pyrimidine catabolism. May facilitate the hydrolysis of carbamate, a reaction that can also occur spontaneously. The sequence is that of Putative carbamate hydrolase RutD from Escherichia coli O26:H11 (strain 11368 / EHEC).